A 351-amino-acid chain; its full sequence is Ribonucleoside-diphosphate reductase subunit beta (351 aa).

The Fe cation site is built by Asp94, Glu124, and His127. Tyr131 is an active-site residue. Fe cation contacts are provided by Glu191, Glu225, and His228.

It belongs to the ribonucleoside diphosphate reductase small chain family. As to quaternary structure, tetramer of two alpha and two beta subunits. Requires Fe cation as cofactor.

It catalyses the reaction a 2'-deoxyribonucleoside 5'-diphosphate + [thioredoxin]-disulfide + H2O = a ribonucleoside 5'-diphosphate + [thioredoxin]-dithiol. Its function is as follows. Provides the precursors necessary for DNA synthesis. Catalyzes the biosynthesis of deoxyribonucleotides from the corresponding ribonucleotides. The protein is Ribonucleoside-diphosphate reductase subunit beta (nrdB) of Treponema pallidum (strain Nichols).